The sequence spans 132 residues: Transcription antitermination protein NusB (132 aa).

It belongs to the NusB family.

Functionally, involved in transcription antitermination. Required for transcription of ribosomal RNA (rRNA) genes. Binds specifically to the boxA antiterminator sequence of the ribosomal RNA (rrn) operons. This chain is Transcription antitermination protein NusB, found in Sulfurimonas denitrificans (strain ATCC 33889 / DSM 1251) (Thiomicrospira denitrificans (strain ATCC 33889 / DSM 1251)).